The sequence spans 335 residues: Mevalonate kinase (335 aa).

Residue 111-121 (PVGAGLGSSAA) coordinates ATP. Catalysis depends on Asp162, which acts as the Proton acceptor.

It belongs to the GHMP kinase family. Mevalonate kinase subfamily. In terms of assembly, homodimer. It depends on Mg(2+) as a cofactor.

It localises to the cytoplasm. It catalyses the reaction (R)-mevalonate + ATP = (R)-5-phosphomevalonate + ADP + H(+). Its pathway is isoprenoid biosynthesis; isopentenyl diphosphate biosynthesis via mevalonate pathway; isopentenyl diphosphate from (R)-mevalonate: step 1/3. Catalyzes the phosphorylation of (R)-mevalonate (MVA) to (R)-mevalonate 5-phosphate (MVAP). Functions in the mevalonate (MVA) pathway leading to isopentenyl diphosphate (IPP), a key precursor for the biosynthesis of isoprenoid compounds such as archaeal membrane lipids. The polypeptide is Mevalonate kinase (Pyrococcus abyssi (strain GE5 / Orsay)).